Here is a 476-residue protein sequence, read N- to C-terminus: Glycogen synthase (476 aa).

An ADP-alpha-D-glucose-binding site is contributed by Lys-15.

Belongs to the glycosyltransferase 1 family. Bacterial/plant glycogen synthase subfamily.

It catalyses the reaction [(1-&gt;4)-alpha-D-glucosyl](n) + ADP-alpha-D-glucose = [(1-&gt;4)-alpha-D-glucosyl](n+1) + ADP + H(+). Its pathway is glycan biosynthesis; glycogen biosynthesis. Its function is as follows. Synthesizes alpha-1,4-glucan chains using ADP-glucose. This chain is Glycogen synthase, found in Streptococcus agalactiae serotype III (strain NEM316).